The following is a 703-amino-acid chain: Glycine--tRNA ligase beta subunit (703 aa).

This sequence belongs to the class-II aminoacyl-tRNA synthetase family. Tetramer of two alpha and two beta subunits.

The protein localises to the cytoplasm. It carries out the reaction tRNA(Gly) + glycine + ATP = glycyl-tRNA(Gly) + AMP + diphosphate. This is Glycine--tRNA ligase beta subunit from Myxococcus xanthus (strain DK1622).